Consider the following 308-residue polypeptide: Cell division protein ZipA (308 aa).

Topologically, residues 1 to 5 are periplasmic; sequence MQELR. Residues 6 to 26 form a helical membrane-spanning segment; it reads LVLILVGALAIAALLFHGLWT. Residues 27 to 308 are Cytoplasmic-facing; that stretch reads SRKETSSKFG…YKQRVKVFCN (282 aa). Residues 43–90 are disordered; that stretch reads FDSESEDEQPTPARGFEQPKESVVDVRQERKEPAFGRDEPNLSQDPLF. A compositionally biased stretch (basic and acidic residues) spans 59–82; the sequence is EQPKESVVDVRQERKEPAFGRDEP.

This sequence belongs to the ZipA family. As to quaternary structure, interacts with FtsZ via their C-terminal domains.

The protein localises to the cell inner membrane. Its function is as follows. Essential cell division protein that stabilizes the FtsZ protofilaments by cross-linking them and that serves as a cytoplasmic membrane anchor for the Z ring. Also required for the recruitment to the septal ring of downstream cell division proteins. The protein is Cell division protein ZipA of Aliivibrio salmonicida (strain LFI1238) (Vibrio salmonicida (strain LFI1238)).